The following is a 417-amino-acid chain: MAVFTPPSGNSNSTDHTHTQDDHDKDDNDIKKFYIRPSLGLKLWGPLVPAPDNLPGLYTLITIQSAVGFFALWRLRRLYKLPPPRRIATGTHSDLSFGELPSEMIVNGKTKIKKDIADFPTLNRFSTTHGDIVLAPPPIIPRQSRFVSVRKLLWGLFGSLLLSQSLLELTRLNFLKYDPWCDEMKSVRDKKFFNNIVKYYHEGIDPTKIKVKDAMNGTPLSTNIPEVKQSVALARAQVEAQNPIIKWFGPLEYKPMSFNEYLNRMEFHLDMFEFFQNKRNIRENSIELINSISHNPQSSSTGLEGLSESKKLHLQNVEKRLHFLASSGDSISAPVKKRSSTTLSRGVILPHDTKGPQDIDLDTIRSLYDPWMTLALETSLSIKFIPTTMPSHTKTPTSTDQPLPGPTPKALTNEKTH.

Residues 1–28 (MAVFTPPSGNSNSTDHTHTQDDHDKDDN) are disordered. Over 1–56 (MAVFTPPSGNSNSTDHTHTQDDHDKDDNDIKKFYIRPSLGLKLWGPLVPAPDNLPG) the chain is Mitochondrial intermembrane. Residues 15-28 (DHTHTQDDHDKDDN) show a composition bias toward basic and acidic residues. The chain crosses the membrane as a helical span at residues 57 to 73 (LYTLITIQSAVGFFALW). The Mitochondrial matrix portion of the chain corresponds to 74 to 151 (RLRRLYKLPP…RQSRFVSVRK (78 aa)). Residues 152-169 (LLWGLFGSLLLSQSLLEL) form a helical membrane-spanning segment. Topologically, residues 170–417 (TRLNFLKYDP…PKALTNEKTH (248 aa)) are mitochondrial intermembrane. Positions 391-401 (SHTKTPTSTDQ) are enriched in polar residues. The segment at 391–417 (SHTKTPTSTDQPLPGPTPKALTNEKTH) is disordered.

It belongs to the MGR1 family. As to quaternary structure, component of the mitochondrial inner membrane i-AAA protease supercomplex composed of MGR1, MGR3 and YME1. With MGR3, forms a subcomplex that binds to YME1 and to substrates to facilitate proteolysis. Interacts directly with YME1.

The protein resides in the mitochondrion inner membrane. Its function is as follows. Component of the mitochondrial inner membrane i-AAA protease supercomplex required for mitochondrial inner membrane protein turnover. Together with MGR3, functions in an adapter complex that targets substrates to the i-AAA protease for degradation. Required for growth of cells lacking the mitochondrial genome. This Saccharomyces cerevisiae (strain ATCC 204508 / S288c) (Baker's yeast) protein is Mitochondrial inner membrane i-AAA protease supercomplex subunit MGR1 (MGR1).